A 656-amino-acid chain; its full sequence is Heparan-alpha-glucosaminide N-acetyltransferase (656 aa).

The interval 1–31 (MTGGSSSRRRRAEERSSAAGTERNSRREAVG) is disordered. Topologically, residues 1–185 (MTGGSSSRRR…IIVNENPVDS (185 aa)) are lumenal, vesicle. N137 and N157 each carry an N-linked (GlcNAc...) asparagine glycan. A disulfide bond links C146 and C455. A helical membrane pass occupies residues 186–206 (NLPVSIAFLVGLALIVAVSLL). Residues 207 to 268 (RLLLSLDDVN…NRLRCVDTFR (62 aa)) lie on the Cytoplasmic side of the membrane. The segment at 234–253 (SELGSPSRADPLSADYQPET) is disordered. Residues S238 and S240 each carry the phosphoserine modification. Y249 bears the Phosphotyrosine mark. A helical membrane pass occupies residues 269-289 (GLALVLMVFVNYGGGKYWYFK). The active site involves H290. Residues 290-295 (HSSWNG) are Lumenal, vesicle-facing. Residues 296-316 (LTVADLVFPWFVFIMGTSIFL) traverse the membrane as a helical segment. Residues 317-338 (SMTSILQRGCSKLKLLGKIVWR) lie on the Cytoplasmic side of the membrane. Residues 339–359 (SFLLICIGVIIVNPNYCLGPL) form a helical membrane-spanning segment. At 360-367 (SWDKVRIP) the chain is on the lumenal, vesicle side. A helical transmembrane segment spans residues 368–388 (GVLQRLGVTYFVVAVLEFFFW). Residues 389–413 (KPVPDSCTLESSCFSLRDITSSWPQ) are Cytoplasmic-facing. A helical transmembrane segment spans residues 414–434 (WLTILTLESIWLALTFFLPVP). At 435-493 (GCPTGYLGPGGIGDLGKYPHCTGGAAGYIDRLLLGDNHLYQHPSSTVLYHTEVAYDPEG) the chain is on the lumenal, vesicle side. A helical transmembrane segment spans residues 494–514 (VLGTINSIVMAFLGVQAGKIL). At 515–522 (VYYKDQTK) the chain is on the cytoplasmic side. Residues 523-543 (AILTRFAAWCCILGLISIVLT) traverse the membrane as a helical segment. The Lumenal, vesicle portion of the chain corresponds to 544–557 (KVSANEGFIPINKN). The helical transmembrane segment at 558-578 (LWSISYVTTLSCFAFFILLIL) threads the bilayer. Residues 579–585 (YPVVDVK) lie on the Cytoplasmic side of the membrane. A helical transmembrane segment spans residues 586–606 (GLWTGTPFFYPGMNSILVYVG). The Lumenal, vesicle segment spans residues 607 to 627 (HEVLENYFPFQWKLADEQSHK). Residues 628–648 (EHLIQNIVATALWVLIAYVLY) traverse the membrane as a helical segment. Positions 641–656 (VLIAYVLYKKKLFWKI) are lysosomal targeting region. Over 649 to 656 (KKKLFWKI) the chain is Cytoplasmic.

In terms of assembly, homooligomer. Homooligomerization is necessary for enzyme activity. Post-translationally, undergoes intralysosomal proteolytic cleavage; occurs within the end of the first and/or the beginning of the second luminal domain and is essential for the activation of the enzyme. In terms of processing, glycosylated. Expressed in the retina.

Its subcellular location is the lysosome membrane. It carries out the reaction alpha-D-glucosaminyl-[heparan sulfate](n) + acetyl-CoA = N-acetyl-alpha-D-glucosaminyl-[heparan sulfate](n) + CoA + H(+). Its function is as follows. Lysosomal acetyltransferase that acetylates the non-reducing terminal alpha-glucosamine residue of intralysosomal heparin or heparan sulfate, converting it into a substrate for luminal alpha-N-acetyl glucosaminidase. In Mus musculus (Mouse), this protein is Heparan-alpha-glucosaminide N-acetyltransferase (Hgsnat).